The following is a 178-amino-acid chain: Large ribosomal subunit protein uL6 (178 aa).

This sequence belongs to the universal ribosomal protein uL6 family. In terms of assembly, part of the 50S ribosomal subunit.

In terms of biological role, this protein binds to the 23S rRNA, and is important in its secondary structure. It is located near the subunit interface in the base of the L7/L12 stalk, and near the tRNA binding site of the peptidyltransferase center. The sequence is that of Large ribosomal subunit protein uL6 from Helicobacter hepaticus (strain ATCC 51449 / 3B1).